The sequence spans 335 residues: tRNA-dihydrouridine(20/20a) synthase (335 aa).

FMN is bound by residues 20–22 and Gln72; that span reads PML. Catalysis depends on Cys102, which acts as the Proton donor. Residues Lys141, His173, 213 to 215, and 235 to 236 each bind FMN; these read NGG and GR.

Belongs to the Dus family. DusA subfamily. FMN serves as cofactor.

The enzyme catalyses 5,6-dihydrouridine(20) in tRNA + NADP(+) = uridine(20) in tRNA + NADPH + H(+). It carries out the reaction 5,6-dihydrouridine(20) in tRNA + NAD(+) = uridine(20) in tRNA + NADH + H(+). It catalyses the reaction 5,6-dihydrouridine(20a) in tRNA + NADP(+) = uridine(20a) in tRNA + NADPH + H(+). The catalysed reaction is 5,6-dihydrouridine(20a) in tRNA + NAD(+) = uridine(20a) in tRNA + NADH + H(+). Catalyzes the synthesis of 5,6-dihydrouridine (D), a modified base found in the D-loop of most tRNAs, via the reduction of the C5-C6 double bond in target uridines. Specifically modifies U20 and U20a in tRNAs. This Shewanella oneidensis (strain ATCC 700550 / JCM 31522 / CIP 106686 / LMG 19005 / NCIMB 14063 / MR-1) protein is tRNA-dihydrouridine(20/20a) synthase.